The primary structure comprises 639 residues: Muscarinic acetylcholine receptor M3 (639 aa).

Over 1-115 (MLTHYQLCFQ…DPLGGHAVWQ (115 aa)) the chain is Extracellular. Residues Asn16, Asn44, Asn45, Asn54, Asn97, and Asn101 are each glycosylated (N-linked (GlcNAc...) asparagine). A helical transmembrane segment spans residues 116–139 (VVLIAFLTGIIALVTIIGNILVIV). Residues 140 to 152 (SFKVNKQLKTVNN) are Cytoplasmic-facing. The helical transmembrane segment at 153-173 (YFLLSLACADLIIGVISMNLF) threads the bilayer. The Extracellular portion of the chain corresponds to 174 to 190 (TTYIIMGHWALGNLACD). Cys189 and Cys269 are disulfide-bonded. Residues 191–212 (LWLSIDYVASNASVMNLLVISF) form a helical membrane-spanning segment. Residues 213–232 (DRYFSITRPLTYRAKRTTKR) are Cytoplasmic-facing. A helical transmembrane segment spans residues 233-255 (AGVMIGLAWIISFVLWAPAILFW). Over 256–277 (QYFVGKRTVPLDECFIQFLSEP) the chain is Extracellular. The chain crosses the membrane as a helical span at residues 278–300 (IITFGTAIAAFYLPVTIMSILYW). Residues 301–542 (RIYKETEKRT…LIKEKKAAQT (242 aa)) lie on the Cytoplasmic side of the membrane. Disordered regions lie at residues 370-404 (PNTDQGDQEHSSSDSWNNNDAAASLENSASSDEED) and 431-471 (LPSS…GGSF). The segment covering 382 to 393 (SDSWNNNDAAAS) has biased composition (low complexity). Residues 443–454 (ELQKSDTDSQEK) show a composition bias toward basic and acidic residues. The chain crosses the membrane as a helical span at residues 543–563 (LSAILFAFIITWTPYNIMVLV). Over 564–576 (NTFCDCVPKTVWN) the chain is Extracellular. The helical transmembrane segment at 577 to 596 (LGYWLCYINSTVNPVCYALC) threads the bilayer. Residues 597–639 (NKMFRNTFKMLLLCQCDKRKRRKQQYQQRQSVIFHKRIPREAS) lie on the Cytoplasmic side of the membrane.

It belongs to the G-protein coupled receptor 1 family. Muscarinic acetylcholine receptor subfamily. CHRM3 sub-subfamily. In terms of tissue distribution, brain, heart atria, and ventricle.

It is found in the cell membrane. The protein resides in the postsynaptic cell membrane. Functionally, the muscarinic acetylcholine receptor mediates various cellular responses, including inhibition of adenylate cyclase, breakdown of phosphoinositides and modulation of potassium channels through the action of G proteins. Primary transducing effect is Pi turnover. This is Muscarinic acetylcholine receptor M3 (CHRM3) from Gallus gallus (Chicken).